The following is a 145-amino-acid chain: Alpha-amylase/trypsin inhibitor CM2 (145 aa).

The signal sequence occupies residues 1-25 (MASKSSITHLLLAAVLVSVFAAAAA).

This sequence belongs to the protease inhibitor I6 (cereal trypsin/alpha-amylase inhibitor) family. As to expression, developing endosperm.

It localises to the secreted. Its function is as follows. Alpha-amylase/trypsin inhibitor. It could be involved in insect defense mechanisms. The polypeptide is Alpha-amylase/trypsin inhibitor CM2 (Triticum aestivum (Wheat)).